The sequence spans 579 residues: MPSASCDTLLDDIEDIVSQEDSKPQDRHFVRKDVVPKVRRRNTQKYLQEEENSPPSDSTIPGIQKIWIRTWGCSHNNSDGEYMAGQLAAYGYKITENASDADLWLLNSCTVKNPAEDHFRNSIKKAQEENKKIVLAGCVPQAQPRQDYLKGLSIIGVQQIDRVVEVVEETIKGHSVRLLGQKKDNGRRLGGARLDLPKIRKNPLIEIISINTGCLNACTYCKTKHARGNLASYPIDELVDRAKQSFQEGVCEIWLTSEDTGAYGRDIGTNLPTLLWKLVEVIPEGAMLRLGMTNPPYILEHLEEMAKILNHPRVYAFLHIPVQSASDSVLMEMKREYCVADFKRVVDFLKEKVPGITIATDIICGFPGETDQDFQETVKLVEEYKFPSLFINQFYPRPGTPAAKMEQVPAQVKKQRTKDLSRVFHSYSPYDHKIGERQQVLVTEESFDSKFYVAHNQFYEQVLVPKNPAFMGKMVEVDIYESGKHFMKGQPVSDAKVYTPSISKPLAKGEVSGLTKDFRNGLGNQLSSGSHTSAASQCDSASSRMVLPMPRLHQDCALRMSVGLALLGLLFAFFVKVYN.

Ser53 carries the phosphoserine modification. One can recognise an MTTase N-terminal domain in the interval 64-172 (QKIWIRTWGC…VVEVVEETIK (109 aa)). [4Fe-4S] cluster contacts are provided by Cys73 and Cys109. At Ser122 the chain carries Phosphoserine. [4Fe-4S] cluster-binding residues include Cys138, Cys214, Cys218, and Cys221. One can recognise a Radical SAM core domain in the interval 200-431 (RKNPLIEIIS…RVFHSYSPYD (232 aa)). The TRAM domain maps to 431-493 (DHKIGERQQV…KHFMKGQPVS (63 aa)). Thr499 carries the post-translational modification Phosphothreonine. The helical transmembrane segment at 556-578 (CALRMSVGLALLGLLFAFFVKVY) threads the bilayer.

It belongs to the methylthiotransferase family. CDKAL1 subfamily. The cofactor is [4Fe-4S] cluster. Expressed in pancreatic islets.

It localises to the endoplasmic reticulum membrane. The catalysed reaction is N(6)-L-threonylcarbamoyladenosine(37) in tRNA + (sulfur carrier)-SH + AH2 + 2 S-adenosyl-L-methionine = 2-methylsulfanyl-N(6)-L-threonylcarbamoyladenosine(37) in tRNA + (sulfur carrier)-H + 5'-deoxyadenosine + L-methionine + A + S-adenosyl-L-homocysteine + 2 H(+). Catalyzes the methylthiolation of N6-threonylcarbamoyladenosine (t(6)A), leading to the formation of 2-methylthio-N6-threonylcarbamoyladenosine (ms(2)t(6)A) at position 37 in tRNAs that read codons beginning with adenine. This is Threonylcarbamoyladenosine tRNA methylthiotransferase (CDKAL1) from Homo sapiens (Human).